We begin with the raw amino-acid sequence, 81 residues long: MAAVAAASAELLIIGWYIFRVLLQVFLECCIYWVGFAFRNPPGTQPIARSEVFRYSLQKLAHTVSRTGRQVLGERRQRAPN.

It belongs to the neuronatin family.

In terms of biological role, may participate in the maintenance of segment identity in the hindbrain and pituitary development, and maturation or maintenance of the overall structure of the nervous system. May function as a regulatory subunit of ion channels. The protein is Neuronatin (NNAT) of Mesocricetus auratus (Golden hamster).